Reading from the N-terminus, the 257-residue chain is Isoprenyl transferase (257 aa).

Residue aspartate 33 is part of the active site. Aspartate 33 contributes to the Mg(2+) binding site. Substrate is bound by residues 34-37, tryptophan 38, arginine 46, histidine 50, and 78-80; these read GNGR and STE. Asparagine 81 functions as the Proton acceptor in the catalytic mechanism. Residues tryptophan 82, arginine 84, arginine 204, and 210 to 212 each bind substrate; that span reads RLS. Glutamate 223 contributes to the Mg(2+) binding site.

It belongs to the UPP synthase family. As to quaternary structure, homodimer. Mg(2+) is required as a cofactor.

Functionally, catalyzes the condensation of isopentenyl diphosphate (IPP) with allylic pyrophosphates generating different type of terpenoids. The protein is Isoprenyl transferase of Clostridium acetobutylicum (strain ATCC 824 / DSM 792 / JCM 1419 / IAM 19013 / LMG 5710 / NBRC 13948 / NRRL B-527 / VKM B-1787 / 2291 / W).